Consider the following 489-residue polypeptide: Tyrosine-protein phosphatase MSG5 (489 aa).

Over residues 1-18 (MQFHSDKQHLDSKTDIDF) the composition is skewed to basic and acidic residues. The tract at residues 1–30 (MQFHSDKQHLDSKTDIDFKPNSPRSLQNRN) is disordered. Residues Ser22, Ser98, and Ser151 each carry the phosphoserine modification. Thr178 is modified (phosphothreonine). The 143-residue stretch at 233–375 (GPLLVLPPNL…LMEWGTMLSK (143 aa)) folds into the Tyrosine-protein phosphatase domain. Cys319 functions as the Phosphocysteine intermediate in the catalytic mechanism. Disordered stretches follow at residues 375 to 401 (KNSP…VSST) and 419 to 489 (LSSS…MFLP). Low complexity predominate over residues 419 to 450 (LSSSPNDSSVNSSEVTPRTPATLTGARTALAT). Residues 451-460 (ERGEDDEHCK) are compositionally biased toward basic and acidic residues.

It belongs to the protein-tyrosine phosphatase family. Non-receptor class dual specificity subfamily.

The catalysed reaction is O-phospho-L-tyrosyl-[protein] + H2O = L-tyrosyl-[protein] + phosphate. Its function is as follows. Dual specificity phosphatase that dephosphorylates MAP kinase FUS3 on both a Tyr and a Ser or Thr. Has a role in adaptation to pheromone. The chain is Tyrosine-protein phosphatase MSG5 (MSG5) from Saccharomyces cerevisiae (strain ATCC 204508 / S288c) (Baker's yeast).